We begin with the raw amino-acid sequence, 402 residues long: MTGIIHSLLDTDLYKFTMLQVVLHQFPQTHSLYEFRCRNASTVYPLADIKEDLEVELDALCQLRFTHDELDYLRSLRFIKSDFVDYLELFQLQRRFVEVGTDDKGRLNIRIEGPMIQAMFFEIFILAIVNELYFRRLETPAVIEEGERRLQAKAARLKEIAAAQNPDEPPFLISDFGTRRRYKLAWQEHVIRTLLEAAPSIVRGTSNVFLAKKLGITPIGTMAHEFLQAFQALDVRLRNFQKAALESWVHEYRGDLGVALTDVVGMDAFLRDFDLYFAKLFDGLRHDSGDPYIWGDKAYAHYQKLKIDSRTKMLTFSDGLDIERSWALHQYFKDRFKTGFGIGTNLTNDMGHTPLNIVLKLVECNGQSVAKLSDSPGKTMTNNSTFLAYLRQVFDVPEPETP.

His-224 is modified (phosphohistidine; by autocatalysis).

Belongs to the NAPRTase family. Post-translationally, transiently phosphorylated on a His residue during the reaction cycle. Phosphorylation strongly increases the affinity for substrates and increases the rate of nicotinate D-ribonucleotide production. Dephosphorylation regenerates the low-affinity form of the enzyme, leading to product release.

The enzyme catalyses nicotinate + 5-phospho-alpha-D-ribose 1-diphosphate + ATP + H2O = nicotinate beta-D-ribonucleotide + ADP + phosphate + diphosphate. It participates in cofactor biosynthesis; NAD(+) biosynthesis; nicotinate D-ribonucleotide from nicotinate: step 1/1. Functionally, catalyzes the synthesis of beta-nicotinate D-ribonucleotide from nicotinate and 5-phospho-D-ribose 1-phosphate at the expense of ATP. The protein is Nicotinate phosphoribosyltransferase of Neisseria meningitidis serogroup A / serotype 4A (strain DSM 15465 / Z2491).